The following is a 205-amino-acid chain: ATP phosphoribosyltransferase (205 aa).

The protein belongs to the ATP phosphoribosyltransferase family. Short subfamily. As to quaternary structure, heteromultimer composed of HisG and HisZ subunits.

The protein resides in the cytoplasm. It catalyses the reaction 1-(5-phospho-beta-D-ribosyl)-ATP + diphosphate = 5-phospho-alpha-D-ribose 1-diphosphate + ATP. It participates in amino-acid biosynthesis; L-histidine biosynthesis; L-histidine from 5-phospho-alpha-D-ribose 1-diphosphate: step 1/9. In terms of biological role, catalyzes the condensation of ATP and 5-phosphoribose 1-diphosphate to form N'-(5'-phosphoribosyl)-ATP (PR-ATP). Has a crucial role in the pathway because the rate of histidine biosynthesis seems to be controlled primarily by regulation of HisG enzymatic activity. The protein is ATP phosphoribosyltransferase of Vesicomyosocius okutanii subsp. Calyptogena okutanii (strain HA).